A 443-amino-acid polypeptide reads, in one-letter code: GPI mannosyltransferase 1 (443 aa).

Transmembrane regions (helical) follow at residues proline 8 to tryptophan 28, proline 68 to glycine 88, alanine 90 to threonine 110, threonine 136 to leucine 156, isoleucine 160 to tyrosine 180, leucine 232 to glycine 252, phenylalanine 273 to valine 291, phenylalanine 302 to leucine 322, serine 347 to leucine 367, isoleucine 374 to leucine 394, and leucine 406 to alanine 426.

It belongs to the PIGM family.

The protein resides in the endoplasmic reticulum membrane. It participates in glycolipid biosynthesis; glycosylphosphatidylinositol-anchor biosynthesis. Functionally, mannosyltransferase involved in glycosylphosphatidylinositol-anchor biosynthesis. Transfers the first alpha-1,4-mannose to GlcN-acyl-PI during GPI precursor assembly. Required for cell wall integrity. This chain is GPI mannosyltransferase 1 (gpi14), found in Emericella nidulans (strain FGSC A4 / ATCC 38163 / CBS 112.46 / NRRL 194 / M139) (Aspergillus nidulans).